The chain runs to 469 residues: MTDLRFRTYTGVSKVVGPLMVLDGVEGIGYGEIAEITLPGGEVRIGQVLETTTTRAMVQVFRGTRDLDTEKTQVRFRGEPMKISLSSDMLGRTFDGSARPIDGGGPVIPECIRDIYGSPINPSAREHPRDSIQTGISSIDGMNTLVRGQKLPIFSGAGLPHNLLASQIARQAKVTGQAEKFAVVFAAMGITYEESAFFIREFEESGALERTVLFLNLADDPAIERIITPRLALTTAEYLAFDKGMHVLVVLTDLTNYCEALREIAAAREEVPGRRGYPGYIYTDLASLYERAGRIRGREGSITQIPILTMPDDDITHPVPDLTGYITEGQIVLSRDLHRKGIYPPVDVLPCLSRLMQGGIGPGRTRADHAEVKNQLYSAYARGIRLKSLVAVMGEEGLTPLDKLYIRFCDRFENDFIRQASYEDRSFDDTLTLAWDLLSILPKAELKRISTEFIKMYYHGEEILECKGP.

Belongs to the ATPase alpha/beta chains family. Has multiple subunits with at least A(3), B(3), C, D, E, F, H, I and proteolipid K(x).

Its subcellular location is the cell membrane. In terms of biological role, component of the A-type ATP synthase that produces ATP from ADP in the presence of a proton gradient across the membrane. The B chain is a regulatory subunit. This is A-type ATP synthase subunit B 3 from Methanospirillum hungatei JF-1 (strain ATCC 27890 / DSM 864 / NBRC 100397 / JF-1).